A 565-amino-acid polypeptide reads, in one-letter code: Oxygen-dependent choline dehydrogenase (565 aa).

7 to 36 is a binding site for FAD; sequence DYIICGAGSAGNVLATRLTEDPDVTVLLLE. Residue H474 is the Proton acceptor of the active site.

This sequence belongs to the GMC oxidoreductase family. FAD is required as a cofactor.

The enzyme catalyses choline + A = betaine aldehyde + AH2. It catalyses the reaction betaine aldehyde + NAD(+) + H2O = glycine betaine + NADH + 2 H(+). It participates in amine and polyamine biosynthesis; betaine biosynthesis via choline pathway; betaine aldehyde from choline (cytochrome c reductase route): step 1/1. Its function is as follows. Involved in the biosynthesis of the osmoprotectant glycine betaine. Catalyzes the oxidation of choline to betaine aldehyde and betaine aldehyde to glycine betaine at the same rate. This chain is Oxygen-dependent choline dehydrogenase, found in Burkholderia thailandensis (strain ATCC 700388 / DSM 13276 / CCUG 48851 / CIP 106301 / E264).